The chain runs to 318 residues: Trans-prenyltransferase (318 aa).

Residues 1–21 form a helical membrane-spanning segment; that stretch reads MLHLIYISIIVVLIIILISYT. Lys85, Arg88, and His122 together coordinate isopentenyl diphosphate. Positions 129 and 135 each coordinate Mg(2+). Position 140 (Arg140) interacts with dimethylallyl diphosphate. Position 141 (Arg141) interacts with isopentenyl diphosphate. Lys216, Thr217, and Gln254 together coordinate dimethylallyl diphosphate.

It belongs to the FPP/GGPP synthase family. Asfivirus trans-prenyltransferase subfamily. The cofactor is Mg(2+).

Its subcellular location is the host endoplasmic reticulum. It localises to the host membrane. The catalysed reaction is isopentenyl diphosphate + dimethylallyl diphosphate = (2E)-geranyl diphosphate + diphosphate. It carries out the reaction isopentenyl diphosphate + (2E)-geranyl diphosphate = (2E,6E)-farnesyl diphosphate + diphosphate. It catalyses the reaction isopentenyl diphosphate + (2E,6E)-farnesyl diphosphate = (2E,6E,10E)-geranylgeranyl diphosphate + diphosphate. The enzyme catalyses isopentenyl diphosphate + (2E,6E,10E)-geranylgeranyl diphosphate = (2E,6E,10E,14E)-geranylfarnesyl diphosphate + diphosphate. The protein operates within isoprenoid biosynthesis; farnesyl diphosphate biosynthesis; farnesyl diphosphate from geranyl diphosphate and isopentenyl diphosphate: step 1/1. Its pathway is isoprenoid biosynthesis; geranyl diphosphate biosynthesis; geranyl diphosphate from dimethylallyl diphosphate and isopentenyl diphosphate: step 1/1. It participates in isoprenoid biosynthesis; geranylgeranyl diphosphate biosynthesis; geranylgeranyl diphosphate from farnesyl diphosphate and isopentenyl diphosphate: step 1/1. Its function is as follows. Trans-prenyltransferase that catalyzes the sequential condensation of isopentenyl diphosphate (IPP) with different allylic diphosphates, such as dimethylallyl diphosphate (DMAPP), geranyl diphosphate (GPP), farnesyl diphosphate (FPP) and geranylgeranyl diphosphate (GGPP), farnesyl diphosphate being the best allylic substrate. The chain is Trans-prenyltransferase from African swine fever virus (isolate Warthog/Namibia/Wart80/1980) (ASFV).